Consider the following 174-residue polypeptide: Putative NADH dehydrogenase/NAD(P)H nitroreductase AF_2267 (174 aa).

107–112 (AARCLG) is an NAD(+) binding site.

This sequence belongs to the nitroreductase family. It depends on FMN as a cofactor.

The polypeptide is Putative NADH dehydrogenase/NAD(P)H nitroreductase AF_2267 (Archaeoglobus fulgidus (strain ATCC 49558 / DSM 4304 / JCM 9628 / NBRC 100126 / VC-16)).